Consider the following 334-residue polypeptide: Glycosylinositol phosphorylceramide mannosyl transferase 1 (334 aa).

At 1-26 (MGGGEVSKEMGACSLAYRRGDQKLRK) the chain is on the cytoplasmic side. A helical; Signal-anchor for type II membrane protein transmembrane segment spans residues 27 to 49 (FVTARSTKFLLFCCIAFVLVTIV). The Lumenal portion of the chain corresponds to 50 to 334 (CRSSRPWVNS…AVDSRNLWFW (285 aa)). An N-linked (GlcNAc...) asparagine glycan is attached at asparagine 58. Residues 145–150 (DSLNNR), 166–168 (DDD), arginine 196, and 258–262 (RNCED) each bind substrate. Aspartate 168 is a binding site for Mn(2+). Cysteine 260 and cysteine 305 are disulfide-bonded. Aspartate 262 is an active-site residue. N-linked (GlcNAc...) asparagine glycosylation is present at asparagine 271. Substrate is bound by residues 289 to 302 (STGI…TEKR) and 292 to 302 (ISSIGGHTEKR).

The protein belongs to the glycosyltransferase 64 family. Requires Mn(2+) as cofactor. In terms of tissue distribution, expressed in leaves, roots, stem, and flowers.

The protein resides in the golgi apparatus membrane. It participates in protein modification; protein glycosylation. The protein operates within sphingolipid metabolism. Mannosyl transferase (ManT) required for the biosynthesis of mannose-carrying glycosylinositol phosphorylceramides (GIPCs). Maybe involved in cell-cell adhesion that maintains the integrity of organs by providing mechanical strength and facilitating the movement of metabolites throughout the plant during development. Prevents abscisic acid- (ABA-) mediated effects on development (e.g. cell size, flowering time, senescence). Probably implicated in beta-(1,4)-galactan biosynthesis thus being a cell-wall synthesis-related (CWSR) protein. The polypeptide is Glycosylinositol phosphorylceramide mannosyl transferase 1 (Arabidopsis thaliana (Mouse-ear cress)).